A 392-amino-acid chain; its full sequence is Phosphoglycerate kinase (392 aa).

Substrate contacts are provided by residues 21-23 (DLN), Arg-36, 59-62 (HLGR), Arg-113, and Arg-146. ATP is bound by residues Lys-197, Glu-319, and 345–348 (GGDT).

This sequence belongs to the phosphoglycerate kinase family. Monomer.

It is found in the cytoplasm. The enzyme catalyses (2R)-3-phosphoglycerate + ATP = (2R)-3-phospho-glyceroyl phosphate + ADP. The protein operates within carbohydrate degradation; glycolysis; pyruvate from D-glyceraldehyde 3-phosphate: step 2/5. This Nitrosococcus oceani (strain ATCC 19707 / BCRC 17464 / JCM 30415 / NCIMB 11848 / C-107) protein is Phosphoglycerate kinase.